The primary structure comprises 147 residues: Large ribosomal subunit protein uL15 (147 aa).

The tract at residues 21 to 49 is disordered; that stretch reads RVGRGEGSKGKTAGRGTKGTKARAPVRPG.

Belongs to the universal ribosomal protein uL15 family. As to quaternary structure, part of the 50S ribosomal subunit.

Its function is as follows. Binds to the 23S rRNA. The chain is Large ribosomal subunit protein uL15 from Tropheryma whipplei (strain TW08/27) (Whipple's bacillus).